Reading from the N-terminus, the 260-residue chain is uncharacterized protein (260 aa).

Positions Leu-8–Lys-166 constitute a PNPLA domain. The GXSXG signature appears at Gly-39–Gly-43. Ser-41 (nucleophile) is an active-site residue. Asp-153 serves as the catalytic Proton acceptor. The DGA/G signature appears at Asp-153 to Ala-155.

Belongs to the NTE family.

This is an uncharacterized protein from Bacillus subtilis (strain 168).